Here is a 300-residue protein sequence, read N- to C-terminus: Ribonuclease HIII (300 aa).

Positions 83–300 constitute an RNase H type-2 domain; it reads IPIIGSDEVG…THKAQALLTK (218 aa). A divalent metal cation-binding residues include D89, E90, and D194.

It belongs to the RNase HII family. RnhC subfamily. It depends on Mn(2+) as a cofactor. The cofactor is Mg(2+).

The protein resides in the cytoplasm. The enzyme catalyses Endonucleolytic cleavage to 5'-phosphomonoester.. In terms of biological role, endonuclease that specifically degrades the RNA of RNA-DNA hybrids. In Streptococcus pyogenes serotype M2 (strain MGAS10270), this protein is Ribonuclease HIII.